The chain runs to 74 residues: U12-theraphotoxin-Hs1a (74 aa).

An N-terminal signal peptide occupies residues 1–20 (MNVKILLLLVGLNLVMHSNA). Residues 21–40 (TGDSETNPAETLFIEEIFRR) constitute a propeptide that is removed on maturation. Cystine bridges form between C42/C56, C49/C61, and C55/C71.

Belongs to the neurotoxin 35 family. In terms of tissue distribution, expressed by the venom gland.

It localises to the secreted. Its function is as follows. Putative ion channel inhibitor. The polypeptide is U12-theraphotoxin-Hs1a (Cyriopagopus schmidti (Chinese bird spider)).